The primary structure comprises 208 residues: MMLITTSHRPTRRTRSFGHDLEKVFPNSLYLTRGKKTIQDLLMEAYDRGYERLLIINVWKGNPLKMTFIKVDPEDWGYIGYLYLHGIKLQREIGFRNIPPIREEMPFVVTTAKRVGIDHTAFAQVFAELTGGKFVPRGNKSLQTIADKNNTDVIGVIENYPRGMAVNFYRFDITRERPVGPLILVKIWIMEDGRRWDYKEALGIKPKE.

One can recognise a Brix domain in the interval 1–196 (MMLITTSHRP…IWIMEDGRRW (196 aa)).

Probably involved in the biogenesis of the ribosome. The chain is Probable Brix domain-containing ribosomal biogenesis protein from Thermococcus kodakarensis (strain ATCC BAA-918 / JCM 12380 / KOD1) (Pyrococcus kodakaraensis (strain KOD1)).